Reading from the N-terminus, the 176-residue chain is COA8 family protein CG14806, mitochondrial (176 aa).

The transit peptide at 1–23 (MNKCFRCQPRISLFQFSLPRCYA) directs the protein to the mitochondrion.

This sequence belongs to the COA8 family.

It localises to the mitochondrion inner membrane. Its function is as follows. May be required for cytochrome c complex (COX) assembly and function, COX being the terminal component of the mitochondrial respiratory chain. (Microbial infection) Required for optimal replication of E.chaffeensis. In Drosophila melanogaster (Fruit fly), this protein is COA8 family protein CG14806, mitochondrial.